The chain runs to 304 residues: HPr kinase/phosphorylase (304 aa).

Residues H136 and K157 contribute to the active site. Position 151–158 (151–158) interacts with ATP; it reads GESGIGKS. Position 158 (S158) interacts with Mg(2+). D175 (proton acceptor; for phosphorylation activity. Proton donor; for dephosphorylation activity) is an active-site residue. The important for the catalytic mechanism of both phosphorylation and dephosphorylation stretch occupies residues 198–207; it reads LEVRGMGIID. E199 serves as a coordination point for Mg(2+). R240 is a catalytic residue. Residues 261–266 form an important for the catalytic mechanism of dephosphorylation region; sequence PIRPGR.

The protein belongs to the HPrK/P family. As to quaternary structure, homohexamer. Requires Mg(2+) as cofactor.

It catalyses the reaction [HPr protein]-L-serine + ATP = [HPr protein]-O-phospho-L-serine + ADP + H(+). The enzyme catalyses [HPr protein]-O-phospho-L-serine + phosphate + H(+) = [HPr protein]-L-serine + diphosphate. Its function is as follows. Catalyzes the ATP- as well as the pyrophosphate-dependent phosphorylation of a specific serine residue in HPr, a phosphocarrier protein of the phosphoenolpyruvate-dependent sugar phosphotransferase system (PTS). HprK/P also catalyzes the pyrophosphate-producing, inorganic phosphate-dependent dephosphorylation (phosphorolysis) of seryl-phosphorylated HPr (P-Ser-HPr). The two antagonistic activities of HprK/P are regulated by several intracellular metabolites, which change their concentration in response to the absence or presence of rapidly metabolisable carbon sources (glucose, fructose, etc.) in the growth medium. Therefore, by controlling the phosphorylation state of HPr, HPrK/P is a sensor enzyme that plays a major role in the regulation of carbon metabolism and sugar transport: it mediates carbon catabolite repression (CCR), and regulates PTS-catalyzed carbohydrate uptake and inducer exclusion. The polypeptide is HPr kinase/phosphorylase (Clostridium acetobutylicum (strain ATCC 824 / DSM 792 / JCM 1419 / IAM 19013 / LMG 5710 / NBRC 13948 / NRRL B-527 / VKM B-1787 / 2291 / W)).